The chain runs to 606 residues: DNA mismatch repair protein MutL (606 aa).

The tract at residues 348 to 378 (QPHAQRPQAPWSAETSPFRPYPPAAGFSERP) is disordered.

This sequence belongs to the DNA mismatch repair MutL/HexB family.

In terms of biological role, this protein is involved in the repair of mismatches in DNA. It is required for dam-dependent methyl-directed DNA mismatch repair. May act as a 'molecular matchmaker', a protein that promotes the formation of a stable complex between two or more DNA-binding proteins in an ATP-dependent manner without itself being part of a final effector complex. The sequence is that of DNA mismatch repair protein MutL from Rhizobium etli (strain CIAT 652).